The chain runs to 83 residues: Protein YciN (83 aa).

The sequence is that of Protein YciN (yciN) from Escherichia coli O157:H7.